A 291-amino-acid chain; its full sequence is G1/S-specific cyclin-D1 (291 aa).

The residue at position 282 (threonine 282) is a Phosphothreonine.

Belongs to the cyclin family. Cyclin D subfamily. As to quaternary structure, interacts with the cdk4 and cdk6 protein kinases to form a serine/threonine kinase holoenzyme complex. The cyclin subunit imparts substrate specificity to the complex. Post-translationally, phosphorylation at Thr-282 by MAP kinases is required for ubiquitination and degradation by the DCX(AMBRA1) complex. Ubiquitinated by the DCX(AMBRA1) complex during the transition from G1 to S cell phase, leading to its degradation. The DCX(AMBRA1) complex represents the major regulator of CCND1 stability during the G1/S transition.

It is found in the nucleus. It localises to the cytoplasm. Its function is as follows. Regulatory component of the cyclin D1-CDK4 (DC) complex that phosphorylates and inhibits members of the retinoblastoma (RB) protein family including RB1 and regulates the cell-cycle during G(1)/S transition. Phosphorylation of RB1 allows dissociation of the transcription factor E2F from the RB/E2F complex and the subsequent transcription of E2F target genes which are responsible for the progression through the G(1) phase. Hypophosphorylates RB1 in early G(1) phase. Cyclin D-CDK4 complexes are major integrators of various mitogenenic and antimitogenic signals. This Xenopus laevis (African clawed frog) protein is G1/S-specific cyclin-D1 (ccnd1).